The following is a 379-amino-acid chain: Succinyl-diaminopimelate desuccinylase (379 aa).

A Zn(2+)-binding site is contributed by His-70. Asp-72 is an active-site residue. Asp-103 contacts Zn(2+). Glu-137 (proton acceptor) is an active-site residue. Residues Glu-138, Glu-166, and His-352 each coordinate Zn(2+).

Belongs to the peptidase M20A family. DapE subfamily. In terms of assembly, homodimer. Zn(2+) serves as cofactor. Requires Co(2+) as cofactor.

It catalyses the reaction N-succinyl-(2S,6S)-2,6-diaminopimelate + H2O = (2S,6S)-2,6-diaminopimelate + succinate. Its pathway is amino-acid biosynthesis; L-lysine biosynthesis via DAP pathway; LL-2,6-diaminopimelate from (S)-tetrahydrodipicolinate (succinylase route): step 3/3. Its function is as follows. Catalyzes the hydrolysis of N-succinyl-L,L-diaminopimelic acid (SDAP), forming succinate and LL-2,6-diaminopimelate (DAP), an intermediate involved in the bacterial biosynthesis of lysine and meso-diaminopimelic acid, an essential component of bacterial cell walls. This is Succinyl-diaminopimelate desuccinylase from Burkholderia vietnamiensis (strain G4 / LMG 22486) (Burkholderia cepacia (strain R1808)).